Consider the following 470-residue polypeptide: 5-hydroxytryptamine receptor 2A (470 aa).

Residues 1–23 (MDVLFEDNAPLSPTTSSLMPSNG) form a disordered region. Residues 1-80 (MDVLFEDNAP…LQEKNWSALL (80 aa)) lie on the Extracellular side of the membrane. Residues 10 to 21 (PLSPTTSSLMPS) are compositionally biased toward low complexity. N-linked (GlcNAc...) asparagine glycans are attached at residues Asn38, Asn44, Asn51, and Asn54. Residues 81–97 (TAVVIILTIAGNILVIM) form a helical membrane-spanning segment. The Cytoplasmic segment spans residues 98 to 111 (AVSLEKKLQNATNY). Residues 112–137 (FLMSLAIADMLLGFLVMPVSMLTILY) traverse the membrane as a helical segment. At 138–146 (GYRWPLPSK) the chain is on the extracellular side. Residues 147-171 (LCAVWIYLDVLFSTASIMHLCAISL) traverse the membrane as a helical segment. Cysteines 148 and 227 form a disulfide. Asp155 is a binding site for serotonin. The DRY motif; important for ligand-induced conformation changes motif lies at 172–174 (DRY). The Cytoplasmic portion of the chain corresponds to 172–191 (DRYVAIQNPIHHSRFNSRTK). Residues 192-215 (AFLKIIAVWTISVGISMPIPVFGL) form a helical membrane-spanning segment. The Extracellular portion of the chain corresponds to 216-232 (QDDSKVFKEGSCLLADD). The chain crosses the membrane as a helical span at residues 233 to 258 (NFVLIGSFVSFFIPLTIMVITYFLTI). Over 259–321 (KSLQKEATLC…QSISNEQKAC (63 aa)) the chain is Cytoplasmic. Ser280 carries the post-translational modification Phosphoserine. A helical transmembrane segment spans residues 322–347 (KVLGIVFFLFVVMWCPFFITNIMAVI). Asn342 lines the serotonin pocket. The cysteines at positions 348 and 352 are disulfide-linked. The Extracellular segment spans residues 348–355 (CKESCNED). A helical membrane pass occupies residues 356–381 (IIGALLNVFVWIGYLSSAVNPLVYTL). The NPxxY motif; important for ligand-induced conformation changes and signaling signature appears at 375-379 (NPLVY). Topologically, residues 382 to 470 (FNKTYRSAFS…NTVNEKVSCV (89 aa)) are cytoplasmic. A PDZ-binding motif is present at residues 468–470 (SCV).

Belongs to the G-protein coupled receptor 1 family. As to quaternary structure, interacts (via C-terminus) with MPDZ and PATJ. May interact (via C-terminus) with MPP3, PRDX6, DLG4, DLG1, CASK, APBA1 and MAGI2. Interacts with GRM2 and DRD2; this may affect signaling. In terms of tissue distribution, ubiquitous.

It is found in the cell membrane. The protein resides in the cell projection. Its subcellular location is the dendrite. It localises to the axon. The protein localises to the cytoplasmic vesicle. It is found in the membrane. The protein resides in the caveola. Its subcellular location is the presynapse. With respect to regulation, G-protein coupled receptor activity is regulated by lipids: oleamide increases HTR2A-mediated activity. Functionally, G-protein coupled receptor for 5-hydroxytryptamine (serotonin). Also functions as a receptor for various drugs and psychoactive substances, including mescaline, psilocybin, 1-(2,5-dimethoxy-4-iodophenyl)-2-aminopropane (DOI) and lysergic acid diethylamide (LSD). Ligand binding causes a conformation change that triggers signaling via guanine nucleotide-binding proteins (G proteins) and modulates the activity of downstream effectors. HTR2A is coupled to G(q)/G(11) G alpha proteins and activates phospholipase C-beta, releasing diacylglycerol (DAG) and inositol 1,4,5-trisphosphate (IP3) second messengers that modulate the activity of phosphatidylinositol 3-kinase and promote the release of Ca(2+) ions from intracellular stores, respectively. Beta-arrestin family members inhibit signaling via G proteins and mediate activation of alternative signaling pathways. Affects neural activity, perception, cognition and mood. Plays a role in the regulation of behavior, including responses to anxiogenic situations and psychoactive substances. Plays a role in intestinal smooth muscle contraction, and may play a role in arterial vasoconstriction. This is 5-hydroxytryptamine receptor 2A (HTR2A) from Canis lupus familiaris (Dog).